A 188-amino-acid polypeptide reads, in one-letter code: Putative pre-16S rRNA nuclease (188 aa).

The interval 144-188 is disordered; it reads HAPGRVVAGPKGRRKARHRGQGGTGTEQQADAGGRARPHATEGKG. The segment covering 154-163 has biased composition (basic residues); it reads KGRRKARHRG.

This sequence belongs to the YqgF nuclease family.

It localises to the cytoplasm. Its function is as follows. Could be a nuclease involved in processing of the 5'-end of pre-16S rRNA. In Kineococcus radiotolerans (strain ATCC BAA-149 / DSM 14245 / SRS30216), this protein is Putative pre-16S rRNA nuclease.